Reading from the N-terminus, the 455-residue chain is Bifunctional protein GlmU (455 aa).

Residues 1–226 (MGLSVVILAA…EFEILGVNDR (226 aa)) form a pyrophosphorylase region. Residues 8 to 11 (LAAG), lysine 22, glutamine 73, 78 to 79 (GT), 99 to 101 (YGD), glycine 136, glutamate 151, asparagine 166, and asparagine 224 each bind UDP-N-acetyl-alpha-D-glucosamine. Aspartate 101 contacts Mg(2+). Position 224 (asparagine 224) interacts with Mg(2+). Residues 227–247 (TQLASLERVWQRNVAEKIMAK) are linker. The segment at 248–455 (GVSIADPNRF…WQRPVKKTDK (208 aa)) is N-acetyltransferase. Arginine 330 and lysine 348 together coordinate UDP-N-acetyl-alpha-D-glucosamine. Histidine 360 acts as the Proton acceptor in catalysis. 2 residues coordinate UDP-N-acetyl-alpha-D-glucosamine: tyrosine 363 and asparagine 374. Acetyl-CoA contacts are provided by residues alanine 377, 383–384 (NY), serine 402, alanine 420, and arginine 437.

This sequence in the N-terminal section; belongs to the N-acetylglucosamine-1-phosphate uridyltransferase family. The protein in the C-terminal section; belongs to the transferase hexapeptide repeat family. As to quaternary structure, homotrimer. Mg(2+) serves as cofactor.

It localises to the cytoplasm. The catalysed reaction is alpha-D-glucosamine 1-phosphate + acetyl-CoA = N-acetyl-alpha-D-glucosamine 1-phosphate + CoA + H(+). The enzyme catalyses N-acetyl-alpha-D-glucosamine 1-phosphate + UTP + H(+) = UDP-N-acetyl-alpha-D-glucosamine + diphosphate. The protein operates within nucleotide-sugar biosynthesis; UDP-N-acetyl-alpha-D-glucosamine biosynthesis; N-acetyl-alpha-D-glucosamine 1-phosphate from alpha-D-glucosamine 6-phosphate (route II): step 2/2. Its pathway is nucleotide-sugar biosynthesis; UDP-N-acetyl-alpha-D-glucosamine biosynthesis; UDP-N-acetyl-alpha-D-glucosamine from N-acetyl-alpha-D-glucosamine 1-phosphate: step 1/1. It participates in bacterial outer membrane biogenesis; LPS lipid A biosynthesis. Its function is as follows. Catalyzes the last two sequential reactions in the de novo biosynthetic pathway for UDP-N-acetylglucosamine (UDP-GlcNAc). The C-terminal domain catalyzes the transfer of acetyl group from acetyl coenzyme A to glucosamine-1-phosphate (GlcN-1-P) to produce N-acetylglucosamine-1-phosphate (GlcNAc-1-P), which is converted into UDP-GlcNAc by the transfer of uridine 5-monophosphate (from uridine 5-triphosphate), a reaction catalyzed by the N-terminal domain. The chain is Bifunctional protein GlmU from Francisella tularensis subsp. novicida (strain U112).